Consider the following 155-residue polypeptide: Protein FAM162B (155 aa).

Residues 95–114 (VKACYIMMGLTIFACLVMIV) traverse the membrane as a helical segment.

The protein belongs to the UPF0389 family.

Its subcellular location is the membrane. The polypeptide is Protein FAM162B (fam162b) (Danio rerio (Zebrafish)).